Reading from the N-terminus, the 468-residue chain is Mitochondrial adenyl nucleotide antiporter SLC25A23 (468 aa).

The regulatory N-terminal domain stretch occupies residues 1–149; the sequence is MRGSPGDAER…DHFLLHSLEN (149 aa). Over 1-188 the chain is Mitochondrial intermembrane; that stretch reads MRGSPGDAER…EKLTGMWWKQ (188 aa). Residues 9-44 enclose the EF-hand 1 domain; it reads ERRQRWGRLFEELDSNKDGRVDVHELRQGLARLGGG. Residues aspartate 22, asparagine 24, aspartate 26, arginine 28, and glutamate 33 each contribute to the Ca(2+) site. The interval 34-67 is disordered; sequence LRQGLARLGGGNPDPGAQQGISSEGDADPDGGLD. Acidic residues predominate over residues 58–67; sequence GDADPDGGLD. EF-hand domains lie at 77–112 and 113–148; these read EREQRLLLMFHSLDRNQDGHIDVSEIQQSFRALGIS and ISLEQAEKILHSMDRDGTMTIDWQEWRDHFLLHSLE. Aspartate 90, asparagine 92, aspartate 94, histidine 96, and glutamate 101 together coordinate Ca(2+). The segment at 150 to 159 is linker region; that stretch reads VEDVLYFWKH. Residues 165 to 468 form a C-terminal transmembrane transporter domain region; the sequence is IGECLTVPDE…MKQALGVTSR (304 aa). 3 Solcar repeats span residues 183–269, 277–362, and 374–462; these read GMWW…IKRA, LHVQ…LKNW, and PGIL…MKQA. Residues 189-206 form a helical membrane-spanning segment; that stretch reads LVAGAVAGAVSRTGTAPL. Residues 207–243 are Mitochondrial matrix-facing; sequence DRLKVFMQVHASKTNRLNILGGLRSMVLEGGIRSLWR. The helical transmembrane segment at 244–263 threads the bilayer; sequence GNGINVLKIAPESAIKFMAY. Residues 264-286 lie on the Mitochondrial intermembrane side of the membrane; the sequence is EQIKRAILGQQETLHVQERFVAG. A helical transmembrane segment spans residues 287–300; sequence SLAGATAQTIIYPM. At 301–336 the chain is on the mitochondrial matrix side; sequence EVLKTRLTLRRTGQYKGLLDCARRILEREGPRAFYR. A helical membrane pass occupies residues 337-356; that stretch reads GYLPNVLGIIPYAGIDLAVY. Topologically, residues 357-379 are mitochondrial intermembrane; it reads ETLKNWWLQQYSHDSADPGILVL. The helical transmembrane segment at 380-397 threads the bilayer; it reads LACGTISSTCGQIASYPL. Residues 398-436 are Mitochondrial matrix-facing; that stretch reads ALVRTRMQAQASIEGGPQLSMLGLLRHILSQEGMRGLYR. The chain crosses the membrane as a helical span at residues 437 to 456; that stretch reads GIAPNFMKVIPAVSISYVVY. Topologically, residues 457 to 468 are mitochondrial intermembrane; the sequence is ENMKQALGVTSR.

Belongs to the mitochondrial carrier (TC 2.A.29) family. In terms of assembly, interacts with MCU. Interacts with MICU1. In terms of tissue distribution, expressed at low levels in most tissues examined, with highest expression in brain, skeletal muscle and pancreas.

It is found in the mitochondrion inner membrane. The enzyme catalyses Mg(2+)(out) + phosphate(in) + ATP(out) = Mg(2+)(in) + phosphate(out) + ATP(in). It carries out the reaction ADP(out) + phosphate(in) + H(+)(out) = ADP(in) + phosphate(out) + H(+)(in). The catalysed reaction is AMP(out) + phosphate(in) = AMP(in) + phosphate(out). It catalyses the reaction phosphate(in) + ATP(out) + 2 H(+)(out) = phosphate(out) + ATP(in) + 2 H(+)(in). The enzyme catalyses dADP(in) + ADP(out) = dADP(out) + ADP(in). It carries out the reaction Mg(2+)(in) + ADP(out) + ATP(in) + H(+)(out) = Mg(2+)(out) + ADP(in) + ATP(out) + H(+)(in). The catalysed reaction is ADP(out) + diphosphate(in) = ADP(in) + diphosphate(out). It catalyses the reaction dAMP(in) + ADP(out) + H(+)(out) = dAMP(out) + ADP(in) + H(+)(in). The enzyme catalyses 3'-AMP(in) + ADP(out) + H(+)(out) = 3'-AMP(out) + ADP(in) + H(+)(in). It carries out the reaction dAMP(out) + phosphate(in) = dAMP(in) + phosphate(out). The catalysed reaction is 3'-AMP(out) + phosphate(in) = 3'-AMP(in) + phosphate(out). It catalyses the reaction dADP(out) + phosphate(in) + H(+)(out) = dADP(in) + phosphate(out) + H(+)(in). Activated by an increase in cytosolic calcium levels that induce a conformational change of the N-terminal regulatory domain, uncapping the channel and allowing transport. Inhibited by bathophenanthroline, mersalyl, p-hydroxymercuribenzoate, bromcresol purple, tannic acid, pyridoxal 5'-phosphate and p-hydroxymercuribenzoate. Electroneutral antiporter that mediates the transport of adenine nucleotides through the inner mitochondrial membrane. Originally identified as an ATP-magnesium/inorganic phosphate antiporter, it also acts as a broad specificity adenyl nucleotide antiporter. By regulating the mitochondrial matrix adenine nucleotide pool could adapt to changing cellular energetic demands and indirectly regulate adenine nucleotide-dependent metabolic pathways. Also acts as a regulator of mitochondrial calcium uptake and can probably transport trace amounts of other divalent metal cations in complex with ATP. In vitro, a low activity is also observed with guanyl and pyrimidine nucleotides. The sequence is that of Mitochondrial adenyl nucleotide antiporter SLC25A23 from Homo sapiens (Human).